Reading from the N-terminus, the 222-residue chain is Ribonuclease S-3 (222 aa).

A signal peptide spans 1 to 22; sequence MFRLQLISAFFILLFSLSPVSA. Cys38 and Cys44 form a disulfide bridge. Asn50 carries an N-linked (GlcNAc...) asparagine glycan. The active-site Proton donor is His54. RNA-binding positions include His54, 92-93, 109-110, and 113-114; these read QM, HE, and RH. Cystine bridges form between Cys68-Cys117, Cys177-Cys210, and Cys193-Cys204. Glu110 is an active-site residue. The active-site Proton acceptor is the His114.

It belongs to the RNase T2 family.

Its subcellular location is the secreted. The protein resides in the extracellular space. The enzyme catalyses a ribonucleotidyl-ribonucleotide-RNA + H2O = a 3'-end 3'-phospho-ribonucleotide-RNA + a 5'-end dephospho-ribonucleoside-RNA + H(+). In terms of biological role, self-incompatibility (SI) is the inherited ability of a flowering plant to prevent self-fertilization by discriminating between self and non-self pollen during pollination. In many species, self-incompatibility is controlled by the single, multiallelic locus S. The polypeptide is Ribonuclease S-3 (S3) (Petunia hybrida (Petunia)).